The primary structure comprises 90 residues: UPF0367 protein Npun_R4552 (90 aa).

It belongs to the UPF0367 family.

The sequence is that of UPF0367 protein Npun_R4552 from Nostoc punctiforme (strain ATCC 29133 / PCC 73102).